A 417-amino-acid chain; its full sequence is Vacuolar cation/proton exchanger 3 (417 aa).

Residues 1-45 (MENPQIEMGAFKANGPQLQNGGLRSSMVQSWNLQRFVESALRSIR) lie on the Cytoplasmic side of the membrane. A helical membrane pass occupies residues 46 to 66 (IVIFTSKLNLLLPFGPASIIL). The Extracellular portion of the chain corresponds to 67–73 (HYTTSRH). Residues 74 to 94 (GLVFLFSMLGITPLAERLGYA) form a helical membrane-spanning segment. Residues 95–105 (TEQLAIYTGPT) lie on the Cytoplasmic side of the membrane. Residues 106-126 (VGGLLNATFGNATEMIIAIYA) form a helical membrane-spanning segment. The tract at residues 115-150 (GNATEMIIAIYALKNGMIRVVQQSLLGSILSNMLLV) is cation selection. Residues 127-140 (LKNGMIRVVQQSLL) lie on the Extracellular side of the membrane. Residues 141 to 161 (GSILSNMLLVMGCAFFAGGIV) traverse the membrane as a helical segment. Residues 162 to 173 (HRNKDQVFSKAT) lie on the Cytoplasmic side of the membrane. The chain crosses the membrane as a helical span at residues 174–194 (AVVNSGLLLMAVMGLMFPAVL). The Extracellular portion of the chain corresponds to 195-207 (HFTHSEVRQGASE). Residues 208 to 230 (VSLSRFSSCIMLVAYASYLYFQL) form a helical membrane-spanning segment. At 231-258 (SGRNNAYSPIGSEEMPNEDAAEEDEESE) the chain is on the cytoplasmic side. A helical transmembrane segment spans residues 259 to 279 (IGMWESIAWLAMLTLWVSILS). The Extracellular portion of the chain corresponds to 280–291 (EYLVNAIEGASD). A helical membrane pass occupies residues 292–312 (SLNLPVAFISVILLPIVGNAA). Positions 309 to 344 (GNAAEHASAIMFAMKDKLDITLGVAIGSSTQISMFV) are cation selection. Over 313-330 (EHASAIMFAMKDKLDITL) the chain is Cytoplasmic. The chain crosses the membrane as a helical span at residues 331–351 (GVAIGSSTQISMFVIPFCVVI). The Extracellular segment spans residues 352–360 (GWMMGQKMD). The helical transmembrane segment at 361-381 (LNFQLFETATLFITVLVVAFM) threads the bilayer. The Cytoplasmic segment spans residues 382-389 (LQDGVANY). A helical transmembrane segment spans residues 390–410 (LKGLMLILCYLIVAASFFVHV). Topologically, residues 411-417 (DPQSSDD) are extracellular.

It belongs to the Ca(2+):cation antiporter (CaCA) (TC 2.A.19) family. Cation/proton exchanger (CAX) subfamily. As to expression, ubiquitous.

The protein resides in the vacuole membrane. Functionally, vacuolar cation/proton exchanger (CAX). Translocates Ca(2+) and other metal ions into vacuoles using the proton gradient formed by H(+)-ATPase and H(+)-pyrophosphatase. This is Vacuolar cation/proton exchanger 3 (CAX3) from Oryza sativa subsp. japonica (Rice).